Reading from the N-terminus, the 469-residue chain is ATP synthase subunit beta (469 aa).

Position 155–162 (155–162) interacts with ATP; it reads GGAGVGKT.

The protein belongs to the ATPase alpha/beta chains family. As to quaternary structure, F-type ATPases have 2 components, CF(1) - the catalytic core - and CF(0) - the membrane proton channel. CF(1) has five subunits: alpha(3), beta(3), gamma(1), delta(1), epsilon(1). CF(0) has three main subunits: a(1), b(2) and c(9-12). The alpha and beta chains form an alternating ring which encloses part of the gamma chain. CF(1) is attached to CF(0) by a central stalk formed by the gamma and epsilon chains, while a peripheral stalk is formed by the delta and b chains.

It is found in the cell inner membrane. The catalysed reaction is ATP + H2O + 4 H(+)(in) = ADP + phosphate + 5 H(+)(out). Produces ATP from ADP in the presence of a proton gradient across the membrane. The catalytic sites are hosted primarily by the beta subunits. The chain is ATP synthase subunit beta from Thermosipho melanesiensis (strain DSM 12029 / CIP 104789 / BI429).